We begin with the raw amino-acid sequence, 63 residues long: Large ribosomal subunit protein bL33 (63 aa).

The protein belongs to the bacterial ribosomal protein bL33 family.

The sequence is that of Large ribosomal subunit protein bL33 from Gloeobacter violaceus (strain ATCC 29082 / PCC 7421).